Consider the following 79-residue polypeptide: Large ribosomal subunit protein bL28 (79 aa).

It belongs to the bacterial ribosomal protein bL28 family.

This chain is Large ribosomal subunit protein bL28, found in Porphyromonas gingivalis (strain ATCC 33277 / DSM 20709 / CIP 103683 / JCM 12257 / NCTC 11834 / 2561).